Consider the following 329-residue polypeptide: Beta-tectorin (329 aa).

The N-terminal stretch at 1-17 (MVTKAFVLLAIFAEASA) is a signal peptide. The region spanning 19-283 (SCAPNKADVI…LSCPVTCDKR (265 aa)) is the ZP domain. N-linked (GlcNAc...) asparagine glycans are attached at residues asparagine 80, asparagine 104, asparagine 116, and asparagine 145. Cysteines 204 and 264 form a disulfide. Residue glycine 305 is the site of GPI-anchor amidated glycine attachment. Positions 306–329 (FSSLYSFSDVLHHLIMMLGICAVL) are cleaved as a propeptide — removed in mature form.

As to quaternary structure, may form homomeric filament after self-association or heteromeric filament after association with alpha-tectorin. Interacts with CEACAM16. The presence of a hydrophobic C-terminus preceded by a potential cleavage site strongly suggests that tectorins are synthesized as glycosylphosphatidylinositol-linked, membrane-bound precursors. Tectorins are targeted to the apical surface of the inner ear epithelia by the lipid and proteolytically released into the extracellular compartment.

It localises to the cell membrane. The protein resides in the secreted. The protein localises to the extracellular space. Its subcellular location is the extracellular matrix. One of the major non-collagenous components of the tectorial membrane. The tectorial membrane is an extracellular matrix of the inner ear that covers the neuroepithelium of the cochlea and contacts the stereocilia bundles of specialized sensory hair cells. Sound induces movement of these hair cells relative to the tectorial membrane, deflects the stereocilia and leads to fluctuations in hair-cell membrane potential, transducing sound into electrical signals. The polypeptide is Beta-tectorin (TECTB) (Homo sapiens (Human)).